A 265-amino-acid polypeptide reads, in one-letter code: 5'-nucleotidase SurE (265 aa).

A divalent metal cation-binding residues include Asp-8, Asp-9, Ser-40, and Asn-98.

The protein belongs to the SurE nucleotidase family. The cofactor is a divalent metal cation.

The protein localises to the cytoplasm. It carries out the reaction a ribonucleoside 5'-phosphate + H2O = a ribonucleoside + phosphate. Its function is as follows. Nucleotidase that shows phosphatase activity on nucleoside 5'-monophosphates. In Nostoc sp. (strain PCC 7120 / SAG 25.82 / UTEX 2576), this protein is 5'-nucleotidase SurE.